Reading from the N-terminus, the 97-residue chain is Putative defensin-like protein 227 (97 aa).

Positions 1-26 (MKWATLFMVSCVLMFFVMNNINEVES) are cleaved as a signal peptide. Cystine bridges form between Cys-35–Cys-97, Cys-45–Cys-76, Cys-53–Cys-91, and Cys-74–Cys-93.

This sequence belongs to the DEFL family.

Its subcellular location is the secreted. The sequence is that of Putative defensin-like protein 227 (SCRL28) from Arabidopsis thaliana (Mouse-ear cress).